A 499-amino-acid polypeptide reads, in one-letter code: Probable cytosol aminopeptidase (499 aa).

Positions 271 and 276 each coordinate Mn(2+). The active site involves lysine 283. 3 residues coordinate Mn(2+): aspartate 294, aspartate 353, and glutamate 355. Arginine 357 is a catalytic residue.

The protein belongs to the peptidase M17 family. It depends on Mn(2+) as a cofactor.

It localises to the cytoplasm. It carries out the reaction Release of an N-terminal amino acid, Xaa-|-Yaa-, in which Xaa is preferably Leu, but may be other amino acids including Pro although not Arg or Lys, and Yaa may be Pro. Amino acid amides and methyl esters are also readily hydrolyzed, but rates on arylamides are exceedingly low.. The catalysed reaction is Release of an N-terminal amino acid, preferentially leucine, but not glutamic or aspartic acids.. Presumably involved in the processing and regular turnover of intracellular proteins. Catalyzes the removal of unsubstituted N-terminal amino acids from various peptides. The polypeptide is Probable cytosol aminopeptidase (Bordetella bronchiseptica (strain ATCC BAA-588 / NCTC 13252 / RB50) (Alcaligenes bronchisepticus)).